The sequence spans 89 residues: Small ribosomal subunit protein uS17 (89 aa).

It belongs to the universal ribosomal protein uS17 family. As to quaternary structure, part of the 30S ribosomal subunit.

Its function is as follows. One of the primary rRNA binding proteins, it binds specifically to the 5'-end of 16S ribosomal RNA. This Xylella fastidiosa (strain 9a5c) protein is Small ribosomal subunit protein uS17.